The following is a 287-amino-acid chain: Nucleoid occlusion protein (287 aa).

A DNA-binding region (H-T-H motif) is located at residues Glu-146–Leu-165.

It belongs to the ParB family.

The protein localises to the cytoplasm. It is found in the nucleoid. Functionally, effects nucleoid occlusion by binding relatively nonspecifically to DNA and preventing the assembly of the division machinery in the vicinity of the nucleoid, especially under conditions that disturb the cell cycle. It helps to coordinate cell division and chromosome segregation by preventing the formation of the Z ring through the nucleoid, which would cause chromosome breakage. The sequence is that of Nucleoid occlusion protein from Listeria monocytogenes serotype 4a (strain HCC23).